Consider the following 451-residue polypeptide: Bifunctional protein GlmU (451 aa).

The pyrophosphorylase stretch occupies residues 1 to 229; that stretch reads MQRHAIILAA…FDEIIGVNDR (229 aa). UDP-N-acetyl-alpha-D-glucosamine-binding positions include 8–11, lysine 22, glutamine 72, and 77–78; these read LAAG and GT. Aspartate 102 serves as a coordination point for Mg(2+). 3 residues coordinate UDP-N-acetyl-alpha-D-glucosamine: glycine 139, glutamate 154, and asparagine 227. Asparagine 227 contacts Mg(2+). The tract at residues 230–250 is linker; that stretch reads LMLSEAEKALQQRINRYHMEN. Positions 251-451 are N-acetyltransferase; it reads GVTIIDPSST…QVNKEGYLKK (201 aa). UDP-N-acetyl-alpha-D-glucosamine-binding residues include arginine 332 and lysine 350. Histidine 362 serves as the catalytic Proton acceptor. Residues tyrosine 365 and asparagine 376 each coordinate UDP-N-acetyl-alpha-D-glucosamine. Residues 385–386, alanine 422, and arginine 439 each bind acetyl-CoA; that span reads NY.

In the N-terminal section; belongs to the N-acetylglucosamine-1-phosphate uridyltransferase family. It in the C-terminal section; belongs to the transferase hexapeptide repeat family. As to quaternary structure, homotrimer. Requires Mg(2+) as cofactor.

The protein resides in the cytoplasm. The catalysed reaction is alpha-D-glucosamine 1-phosphate + acetyl-CoA = N-acetyl-alpha-D-glucosamine 1-phosphate + CoA + H(+). It carries out the reaction N-acetyl-alpha-D-glucosamine 1-phosphate + UTP + H(+) = UDP-N-acetyl-alpha-D-glucosamine + diphosphate. The protein operates within nucleotide-sugar biosynthesis; UDP-N-acetyl-alpha-D-glucosamine biosynthesis; N-acetyl-alpha-D-glucosamine 1-phosphate from alpha-D-glucosamine 6-phosphate (route II): step 2/2. Its pathway is nucleotide-sugar biosynthesis; UDP-N-acetyl-alpha-D-glucosamine biosynthesis; UDP-N-acetyl-alpha-D-glucosamine from N-acetyl-alpha-D-glucosamine 1-phosphate: step 1/1. It participates in bacterial outer membrane biogenesis; LPS lipid A biosynthesis. Its function is as follows. Catalyzes the last two sequential reactions in the de novo biosynthetic pathway for UDP-N-acetylglucosamine (UDP-GlcNAc). The C-terminal domain catalyzes the transfer of acetyl group from acetyl coenzyme A to glucosamine-1-phosphate (GlcN-1-P) to produce N-acetylglucosamine-1-phosphate (GlcNAc-1-P), which is converted into UDP-GlcNAc by the transfer of uridine 5-monophosphate (from uridine 5-triphosphate), a reaction catalyzed by the N-terminal domain. This is Bifunctional protein GlmU from Staphylococcus epidermidis.